The chain runs to 245 residues: Large ribosomal subunit protein uL2 (245 aa).

A disordered region spans residues 198–245; the sequence is VSHPHGGGSHKRPGKPTTVARTAPPGQKVGHIAARKTGRAKRRAATKR. Residues 230-245 are compositionally biased toward basic residues; it reads AARKTGRAKRRAATKR.

The protein belongs to the universal ribosomal protein uL2 family. In terms of assembly, part of the 50S ribosomal subunit. Forms a bridge to the 30S subunit in the 70S ribosome.

One of the primary rRNA binding proteins. Required for association of the 30S and 50S subunits to form the 70S ribosome, for tRNA binding and peptide bond formation. It has been suggested to have peptidyltransferase activity; this is somewhat controversial. Makes several contacts with the 16S rRNA in the 70S ribosome. The polypeptide is Large ribosomal subunit protein uL2 (Korarchaeum cryptofilum (strain OPF8)).